The following is a 70-amino-acid chain: Large ribosomal subunit protein bL33m (70 aa).

Belongs to the bacterial ribosomal protein bL33 family. Component of the mitochondrial large ribosomal subunit (mt-LSU). Mature yeast 74S mitochondrial ribosomes consist of a small (37S) and a large (54S) subunit. The 37S small subunit contains a 15S ribosomal RNA (15S mt-rRNA) and 34 different proteins. The 54S large subunit contains a 21S rRNA (21S mt-rRNA) and 46 different proteins. bL33m stabilizes the tRNA acceptor stem in the E-site.

It is found in the mitochondrion. In terms of biological role, component of the mitochondrial ribosome (mitoribosome), a dedicated translation machinery responsible for the synthesis of mitochondrial genome-encoded proteins, including at least some of the essential transmembrane subunits of the mitochondrial respiratory chain. The mitoribosomes are attached to the mitochondrial inner membrane and translation products are cotranslationally integrated into the membrane. This is Large ribosomal subunit protein bL33m (MRPL39) from Saccharomyces cerevisiae (strain ATCC 204508 / S288c) (Baker's yeast).